Reading from the N-terminus, the 73-residue chain is UPF0352 protein HSM_0097 (73 aa).

It belongs to the UPF0352 family.

The sequence is that of UPF0352 protein HSM_0097 from Histophilus somni (strain 2336) (Haemophilus somnus).